A 68-amino-acid chain; its full sequence is DNA gyrase inhibitor YacG (68 aa).

The Zn(2+) site is built by Cys-12, Cys-15, Cys-30, and Cys-34. The disordered stretch occupies residues 48-68 (KLKTQDAPTSGKGQHSDDYED).

Belongs to the DNA gyrase inhibitor YacG family. Interacts with GyrB. The cofactor is Zn(2+).

Inhibits all the catalytic activities of DNA gyrase by preventing its interaction with DNA. Acts by binding directly to the C-terminal domain of GyrB, which probably disrupts DNA binding by the gyrase. This Acinetobacter baylyi (strain ATCC 33305 / BD413 / ADP1) protein is DNA gyrase inhibitor YacG.